A 100-amino-acid chain; its full sequence is Urease subunit gamma (100 aa).

Belongs to the urease gamma subunit family. Heterotrimer of UreA (gamma), UreB (beta) and UreC (alpha) subunits. Three heterotrimers associate to form the active enzyme.

It is found in the cytoplasm. It catalyses the reaction urea + 2 H2O + H(+) = hydrogencarbonate + 2 NH4(+). Its pathway is nitrogen metabolism; urea degradation; CO(2) and NH(3) from urea (urease route): step 1/1. The chain is Urease subunit gamma from Synechococcus sp. (strain RCC307).